The sequence spans 48 residues: Osteocalcin (48 aa).

Residues 1–46 (SFAVGSSYGAAPDPLEAQREVCELNPDCDELADHIGFQEAYRRFYG) form the Gla domain. Ca(2+) is bound by residues E16, E20, E23, and D29. 3 positions are modified to 4-carboxyglutamate: E16, E20, and E23. C22 and C28 are joined by a disulfide.

The protein belongs to the osteocalcin/matrix Gla protein family. In terms of processing, gamma-carboxyglutamate residues are formed by vitamin K dependent carboxylation by GGCX. These residues are essential for the binding of calcium.

Its subcellular location is the secreted. The carboxylated form is one of the main organic components of the bone matrix, which constitutes 1-2% of the total bone protein. The carboxylated form binds strongly to apatite and calcium. The sequence is that of Osteocalcin (BGLAP) from Dromaius novaehollandiae (Emu).